Consider the following 673-residue polypeptide: uncharacterized protein (673 aa).

Over 1-208 (MSTHSNDYFS…STGQLELPPD (208 aa)) the chain is Cytoplasmic. Serine 57, serine 112, and serine 172 each carry phosphoserine. A helical membrane pass occupies residues 209 to 229 (GGYGWVVTFCVFLTMFSTWGC). A glycan (N-linked (GlcNAc...) asparagine) is linked at asparagine 230. Residues 230–255 (NASFGVDLAYYLNHDTYPGASKYDYA) lie on the Lumenal side of the membrane. Residues 256–276 (LIAGLTVFLGQLLSPLVMALM) traverse the membrane as a helical segment. Arginine 277 is a topological domain (cytoplasmic). Residues 278-298 (IIGLRTTMLFGDAVMLAAYLL) traverse the membrane as a helical segment. At 299 to 315 (ASFTTKLWQLYVTQGFM) the chain is on the lumenal side. A helical membrane pass occupies residues 316-336 (VGCSISLIFVPATTVLPGWFL). The Cytoplasmic portion of the chain corresponds to 337–339 (KKR). A helical transmembrane segment spans residues 340 to 360 (AVAMGVSLLGTGAGGVVYGLA). The Lumenal segment spans residues 361–372 (TNKMLSDFGNTR). The helical transmembrane segment at 373-393 (WCLRIIGISCSISVLVAIALL) threads the bilayer. Over 394-426 (KERNPTPAIGLKSPRAMFEQLKAMFSLKVITKP) the chain is Cytoplasmic. Residues 427–447 (FVVLIALWFMFALFAYNMMVF) traverse the membrane as a helical segment. The Lumenal segment spans residues 448-504 (TLSSYAISKGLSSHDASTLTAILNGSQSIGRPLMGLAGDKFGRANVTIVLTTLLTIY). N-linked (GlcNAc...) asparagine glycans are attached at residues asparagine 471 and asparagine 492. Residues 505–525 (MFAFWIPAHTFVQLIFFSILV) traverse the membrane as a helical segment. The Cytoplasmic portion of the chain corresponds to 526–549 (GSCVGVANVMNTVLIADMVKPEEF). Residues 550-570 (LPAWAFVNYCGAPFLLVCEVI) form a helical membrane-spanning segment. Topologically, residues 571-584 (AQALTVEKDKSNPY) are lumenal. Residues 585–605 (LHAQIFCGCCFIAALILISIL) form a helical membrane-spanning segment. Residues 606-673 (REYSIRMKLT…FLRMVYPMKV (68 aa)) are Cytoplasmic-facing. Serine 637 is modified (phosphoserine).

It belongs to the major facilitator superfamily. Monocarboxylate porter (TC 2.A.1.13) family.

It is found in the endoplasmic reticulum membrane. This is an uncharacterized protein from Saccharomyces cerevisiae (strain ATCC 204508 / S288c) (Baker's yeast).